A 697-amino-acid chain; its full sequence is Phenoloxidase 1 (697 aa).

Positions 1 to 101 are cleaved as a propeptide — removed by PPAE1; it reads MSDMSGDVVE…PKHQEMATEV (101 aa). Residues His217, His221, and His247 each contribute to the Cu cation site. N-linked (GlcNAc...) asparagine glycans are attached at residues Asn260 and Asn313. Glu355 serves as the catalytic Proton acceptor. Cu cation contacts are provided by His370, His374, and His410. Asn498 and Asn552 each carry an N-linked (GlcNAc...) asparagine glycan. 2 disulfides stabilise this stretch: Cys587/Cys631 and Cys589/Cys638.

It belongs to the tyrosinase family. In terms of assembly, heterodimer. Cu(2+) serves as cofactor. In terms of processing, activated by the cleavage of the N-terminal propeptide by PPAE1. In terms of tissue distribution, expressed in hemocytes.

It is found in the secreted. The enzyme catalyses L-tyrosine + O2 = L-dopaquinone + H2O. It carries out the reaction 2 L-dopa + O2 = 2 L-dopaquinone + 2 H2O. Activated by a cationic detergent cetyl pyridinium chloride (CPC). Inhibited by phenyl thio-urea (PTU). In terms of biological role, this is a copper-containing oxidase that functions in the formation of pigments such as melanins and other polyphenolic compounds. Catalyzes the rate-limiting conversions of tyrosine to DOPA, DOPA to DOPA-quinone and possibly 5,6 dihydroxyindole to indole-5'6 quinone. Catalyzes the oxidation of 4-methylcatechol. Binds to the surface of hemocytes and is involved in hemocyte melanization. The chain is Phenoloxidase 1 from Spodoptera litura (Asian cotton leafworm).